The following is a 711-amino-acid chain: Polyribonucleotide nucleotidyltransferase (711 aa).

Residues Asp-486 and Asp-492 each coordinate Mg(2+). Positions 553–612 constitute a KH domain; it reads PRIHTIKINPDKIKDVIGKGGSVIRALTEETGTTIEIEDDGTVKIAATDGEKAKHAIRRI. The 69-residue stretch at 622-690 folds into the S1 motif domain; sequence GRVYTGKVTR…RQGRIRLSIK (69 aa). The tract at residues 689–711 is disordered; that stretch reads IKEATEQSQPAAAPEAPAAEQGE. A compositionally biased stretch (low complexity) spans 694 to 711; that stretch reads EQSQPAAAPEAPAAEQGE.

It belongs to the polyribonucleotide nucleotidyltransferase family. As to quaternary structure, component of the RNA degradosome, which is a multiprotein complex involved in RNA processing and mRNA degradation. Requires Mg(2+) as cofactor.

Its subcellular location is the cytoplasm. It catalyses the reaction RNA(n+1) + phosphate = RNA(n) + a ribonucleoside 5'-diphosphate. Functionally, involved in mRNA degradation. Catalyzes the phosphorolysis of single-stranded polyribonucleotides processively in the 3'- to 5'-direction. The polypeptide is Polyribonucleotide nucleotidyltransferase (Escherichia coli (strain SE11)).